Consider the following 208-residue polypeptide: MEAPPVTTMPVSGGTINMMEYLLQGSILDQGLESLLHRLRGLCDNMEPETFADHESVYLLKGQQASPFVLRARRPLDRPGAPWHLRYLGQPEAGDRSRHTLVRNCVDIATSDVLPEFLQEMGFRMDHEFVARGHLFRKGVMKVAVYKVFRVLVAGAAEGAEPLSLSYLVELSAVAPAGQDNIADEVRGFAEQLRPLVQLEKIDPKRLM.

This sequence belongs to the Mediator complex subunit 18 family. In terms of assembly, component of the Mediator complex.

It is found in the nucleus. Its function is as follows. Component of the Mediator complex, a coactivator involved in the regulated transcription of nearly all RNA polymerase II-dependent genes. Mediator functions as a bridge to convey information from gene-specific regulatory proteins to the basal RNA polymerase II transcription machinery. Mediator is recruited to promoters by direct interactions with regulatory proteins and serves as a scaffold for the assembly of a functional preinitiation complex with RNA polymerase II and the general transcription factors. The protein is Mediator of RNA polymerase II transcription subunit 18 (med18) of Xenopus tropicalis (Western clawed frog).